Here is a 124-residue protein sequence, read N- to C-terminus: Small ribosomal subunit protein uS12 (124 aa).

At aspartate 89 the chain carries 3-methylthioaspartic acid.

Belongs to the universal ribosomal protein uS12 family. In terms of assembly, part of the 30S ribosomal subunit. Contacts proteins S8 and S17. May interact with IF1 in the 30S initiation complex.

Functionally, with S4 and S5 plays an important role in translational accuracy. In terms of biological role, interacts with and stabilizes bases of the 16S rRNA that are involved in tRNA selection in the A site and with the mRNA backbone. Located at the interface of the 30S and 50S subunits, it traverses the body of the 30S subunit contacting proteins on the other side and probably holding the rRNA structure together. The combined cluster of proteins S8, S12 and S17 appears to hold together the shoulder and platform of the 30S subunit. In Shewanella frigidimarina (strain NCIMB 400), this protein is Small ribosomal subunit protein uS12.